The chain runs to 306 residues: Dermonecrotic toxin LiSicTox-alphaIA2bi (306 aa).

The N-terminal stretch at 1–18 is a signal peptide; the sequence is MLPYIALILVCWSVLSQA. A propeptide spanning residues 19–26 is cleaved from the precursor; that stretch reads AQTDVEGR. The active site involves His-38. Mg(2+)-binding residues include Glu-58 and Asp-60. The active-site Nucleophile is the His-74. Disulfide bonds link Cys-78–Cys-84 and Cys-80–Cys-223. Asp-118 provides a ligand contact to Mg(2+). N-linked (GlcNAc...) asparagine glycosylation occurs at Asn-283.

Belongs to the arthropod phospholipase D family. Class II subfamily. It depends on Mg(2+) as a cofactor. Expressed by the venom gland.

The protein resides in the secreted. The catalysed reaction is an N-(acyl)-sphingosylphosphocholine = an N-(acyl)-sphingosyl-1,3-cyclic phosphate + choline. The enzyme catalyses an N-(acyl)-sphingosylphosphoethanolamine = an N-(acyl)-sphingosyl-1,3-cyclic phosphate + ethanolamine. It carries out the reaction a 1-acyl-sn-glycero-3-phosphocholine = a 1-acyl-sn-glycero-2,3-cyclic phosphate + choline. It catalyses the reaction a 1-acyl-sn-glycero-3-phosphoethanolamine = a 1-acyl-sn-glycero-2,3-cyclic phosphate + ethanolamine. Its function is as follows. Dermonecrotic toxins cleave the phosphodiester linkage between the phosphate and headgroup of certain phospholipids (sphingolipid and lysolipid substrates), forming an alcohol (often choline) and a cyclic phosphate. This toxin acts on sphingomyelin (SM). It may also act on ceramide phosphoethanolamine (CPE), lysophosphatidylcholine (LPC) and lysophosphatidylethanolamine (LPE), but not on lysophosphatidylserine (LPS), and lysophosphatidylglycerol (LPG). It acts by transphosphatidylation, releasing exclusively cyclic phosphate products as second products. Induces dermonecrosis, hemolysis, increased vascular permeability, edema, inflammatory response, and platelet aggregation. The protein is Dermonecrotic toxin LiSicTox-alphaIA2bi of Loxosceles intermedia (Brown spider).